We begin with the raw amino-acid sequence, 759 residues long: Nucleolar RNA helicase 2-A (759 aa).

Residues 1–154 (MPVKVYAEEM…KKRKTDTTEI (154 aa)) form a disordered region. The span at 77-86 (ETAEECDGEQ) shows a compositional bias: acidic residues. A Q motif motif is present at residues 179 to 207 (GDFSKFPLSKETIKNLQAKGVSYLFPIQS). Residues 210–389 (FHTAYSGKDV…KKYMRKQFEK (180 aa)) form the Helicase ATP-binding domain. An ATP-binding site is contributed by 223–230 (ARTGTGKT). A DEAD box motif is present at residues 332-335 (DEVD). A Helicase C-terminal domain is found at 422-566 (DLVQVYSGSH…VGVPSLLNVA (145 aa)). A disordered region spans residues 709–759 (QESERNFDGPRNRGFGGRGRRPFDRRNNSRNSNRGGGGRGRNRNGGFRRGR). Residues 710–719 (ESERNFDGPR) show a composition bias toward basic and acidic residues. The span at 748 to 759 (GRNRNGGFRRGR) shows a compositional bias: basic residues.

It belongs to the DEAD box helicase family. DDX21/DDX50 subfamily. As to expression, widely expressed. Expressed at higher level in stomach. Expressed at higher level compared to ddx21-b.

It localises to the nucleus. The protein resides in the nucleolus. The protein localises to the nucleoplasm. Its subcellular location is the cytoplasm. It is found in the cytosol. It localises to the mitochondrion. The catalysed reaction is ATP + H2O = ADP + phosphate + H(+). Its function is as follows. RNA helicase that acts as a sensor of the transcriptional status of both RNA polymerase (Pol) I and II: promotes ribosomal RNA (rRNA) processing and transcription from polymerase II (Pol II). Binds various RNAs, such as rRNAs, snoRNAs, 7SK and, at lower extent, mRNAs. In the nucleolus, localizes to rDNA locus, where it directly binds rRNAs and snoRNAs, and promotes rRNA transcription, processing and modification. Required for rRNA 2'-O-methylation, possibly by promoting the recruitment of late-acting snoRNAs SNORD56 and SNORD58 with pre-ribosomal complexes. In the nucleoplasm, binds 7SK RNA and is recruited to the promoters of Pol II-transcribed genes: acts by facilitating the release of P-TEFb from inhibitory 7SK snRNP in a manner that is dependent on its helicase activity, thereby promoting transcription of its target genes. Required to prevent R-loop-associated DNA damage and transcription-associated genomic instability. The polypeptide is Nucleolar RNA helicase 2-A (ddx21-a) (Xenopus laevis (African clawed frog)).